The sequence spans 328 residues: Ribosomal protein L11 methyltransferase (328 aa).

S-adenosyl-L-methionine contacts are provided by Thr-158, Gly-180, Asp-202, and Asn-246.

This sequence belongs to the methyltransferase superfamily. PrmA family.

The protein resides in the cytoplasm. The catalysed reaction is L-lysyl-[protein] + 3 S-adenosyl-L-methionine = N(6),N(6),N(6)-trimethyl-L-lysyl-[protein] + 3 S-adenosyl-L-homocysteine + 3 H(+). Its function is as follows. Methylates ribosomal protein L11. The polypeptide is Ribosomal protein L11 methyltransferase (Polynucleobacter necessarius subsp. necessarius (strain STIR1)).